A 158-amino-acid polypeptide reads, in one-letter code: MNKQRGTYSEVSLAQDPKRQQRKLKGNKSSISGTKQEIFQVELNLQNASSDHQGNDKTYHCKGLLPPPERLTAEVLGIICIVLMATVLKTIVLIPCIGVLEQNNFSLNRRMQKACDCGHCPEEWITYSNSCYYIGKERRTWEEGVCWPVLQRTLICFL.

Residues 1–12 are compositionally biased toward polar residues; sequence MNKQRGTYSEVS. The tract at residues 1–30 is disordered; the sequence is MNKQRGTYSEVSLAQDPKRQQRKLKGNKSS. The Cytoplasmic portion of the chain corresponds to 1 to 74; the sequence is MNKQRGTYSE…LPPPERLTAE (74 aa). The helical transmembrane segment at 75–95 threads the bilayer; sequence VLGIICIVLMATVLKTIVLIP. Over 96-158 the chain is Extracellular; sequence CIGVLEQNNF…VLQRTLICFL (63 aa).

In terms of assembly, can form disulfide-bonded heterodimer with CD94. In terms of tissue distribution, natural killer cells.

It is found in the membrane. In terms of biological role, may play a role as a receptor for the recognition of MHC class I HLA-E molecules by NK cells. In Pan troglodytes (Chimpanzee), this protein is NKG2-F type II integral membrane protein (KLRC4).